The following is a 578-amino-acid chain: Phosphoenolpyruvate-protein phosphotransferase (578 aa).

H195 functions as the Tele-phosphohistidine intermediate in the catalytic mechanism. 2 residues coordinate phosphoenolpyruvate: R302 and R338. The Mg(2+) site is built by E437 and D461. Residues 460 to 461 and R471 contribute to the phosphoenolpyruvate site; that span reads ND. The active-site Proton donor is the C508.

This sequence belongs to the PEP-utilizing enzyme family. In terms of assembly, homodimer. Requires Mg(2+) as cofactor.

The protein localises to the cytoplasm. It catalyses the reaction L-histidyl-[protein] + phosphoenolpyruvate = N(pros)-phospho-L-histidyl-[protein] + pyruvate. General (non sugar-specific) component of the phosphoenolpyruvate-dependent sugar phosphotransferase system (sugar PTS). This major carbohydrate active-transport system catalyzes the phosphorylation of incoming sugar substrates concomitantly with their translocation across the cell membrane. Enzyme I transfers the phosphoryl group from phosphoenolpyruvate (PEP) to the phosphoryl carrier protein (HPr). In Bacillus sp. (strain S), this protein is Phosphoenolpyruvate-protein phosphotransferase (ptsI).